The following is a 432-amino-acid chain: NADH-quinone oxidoreductase subunit D (432 aa).

Belongs to the complex I 49 kDa subunit family. As to quaternary structure, NDH-1 is composed of 14 different subunits. Subunits NuoB, C, D, E, F, and G constitute the peripheral sector of the complex.

The protein localises to the cell membrane. The enzyme catalyses a quinone + NADH + 5 H(+)(in) = a quinol + NAD(+) + 4 H(+)(out). Its function is as follows. NDH-1 shuttles electrons from NADH, via FMN and iron-sulfur (Fe-S) centers, to quinones in the respiratory chain. The immediate electron acceptor for the enzyme in this species is believed to be a menaquinone. Couples the redox reaction to proton translocation (for every two electrons transferred, four hydrogen ions are translocated across the cytoplasmic membrane), and thus conserves the redox energy in a proton gradient. The sequence is that of NADH-quinone oxidoreductase subunit D from Mycobacteroides abscessus (strain ATCC 19977 / DSM 44196 / CCUG 20993 / CIP 104536 / JCM 13569 / NCTC 13031 / TMC 1543 / L948) (Mycobacterium abscessus).